Consider the following 361-residue polypeptide: S-adenosylmethionine:tRNA ribosyltransferase-isomerase (361 aa).

This sequence belongs to the QueA family. Monomer.

It is found in the cytoplasm. It carries out the reaction 7-aminomethyl-7-carbaguanosine(34) in tRNA + S-adenosyl-L-methionine = epoxyqueuosine(34) in tRNA + adenine + L-methionine + 2 H(+). The protein operates within tRNA modification; tRNA-queuosine biosynthesis. Transfers and isomerizes the ribose moiety from AdoMet to the 7-aminomethyl group of 7-deazaguanine (preQ1-tRNA) to give epoxyqueuosine (oQ-tRNA). This chain is S-adenosylmethionine:tRNA ribosyltransferase-isomerase, found in Actinobacillus pleuropneumoniae serotype 5b (strain L20).